Here is a 419-residue protein sequence, read N- to C-terminus: uncharacterized protein (419 aa).

This is an uncharacterized protein from Connochaetes taurinus (Blue wildebeest).